The chain runs to 116 residues: T cell receptor alpha variable 19 (116 aa).

A signal peptide spans 1–21 (MLTASLLRAVIASICVVSSMA). Residues 22 to 116 (QKVTQAQTEI…SAVYFCALSE (95 aa)) form the Ig-like domain. A disulfide bridge links C43 with C112. N-linked (GlcNAc...) asparagine glycosylation is present at N96.

Alpha-beta TR is a heterodimer composed of an alpha and beta chain; disulfide-linked. The alpha-beta TR is associated with the transmembrane signaling CD3 coreceptor proteins to form the TR-CD3 (TcR or TCR). The assembly of alpha-beta TR heterodimers with CD3 occurs in the endoplasmic reticulum where a single alpha-beta TR heterodimer associates with one CD3D-CD3E heterodimer, one CD3G-CD3E heterodimer and one CD247 homodimer forming a stable octameric structure. CD3D-CD3E and CD3G-CD3E heterodimers preferentially associate with TR alpha and TR beta chains, respectively. The association of the CD247 homodimer is the last step of TcR assembly in the endoplasmic reticulum and is required for transport to the cell surface.

The protein localises to the cell membrane. In terms of biological role, v region of the variable domain of T cell receptor (TR) alpha chain that participates in the antigen recognition. Alpha-beta T cell receptors are antigen specific receptors which are essential to the immune response and are present on the cell surface of T lymphocytes. Recognize peptide-major histocompatibility (MH) (pMH) complexes that are displayed by antigen presenting cells (APC), a prerequisite for efficient T cell adaptive immunity against pathogens. Binding of alpha-beta TR to pMH complex initiates TR-CD3 clustering on the cell surface and intracellular activation of LCK that phosphorylates the ITAM motifs of CD3G, CD3D, CD3E and CD247 enabling the recruitment of ZAP70. In turn ZAP70 phosphorylates LAT, which recruits numerous signaling molecules to form the LAT signalosome. The LAT signalosome propagates signal branching to three major signaling pathways, the calcium, the mitogen-activated protein kinase (MAPK) kinase and the nuclear factor NF-kappa-B (NF-kB) pathways, leading to the mobilization of transcription factors that are critical for gene expression and essential for T cell growth and differentiation. The T cell repertoire is generated in the thymus, by V-(D)-J rearrangement. This repertoire is then shaped by intrathymic selection events to generate a peripheral T cell pool of self-MH restricted, non-autoaggressive T cells. Post-thymic interaction of alpha-beta TR with the pMH complexes shapes TR structural and functional avidity. This is T cell receptor alpha variable 19 from Homo sapiens (Human).